A 444-amino-acid chain; its full sequence is Probable D-serine dehydratase (444 aa).

K118 is modified (N6-(pyridoxal phosphate)lysine).

The protein belongs to the serine/threonine dehydratase family. DsdA subfamily. Pyridoxal 5'-phosphate serves as cofactor.

The enzyme catalyses D-serine = pyruvate + NH4(+). The polypeptide is Probable D-serine dehydratase (Desulfitobacterium hafniense (strain Y51)).